Here is a 315-residue protein sequence, read N- to C-terminus: Porphobilinogen deaminase (315 aa).

Cysteine 234 is subject to S-(dipyrrolylmethanemethyl)cysteine.

Belongs to the HMBS family. Monomer. Dipyrromethane serves as cofactor.

The enzyme catalyses 4 porphobilinogen + H2O = hydroxymethylbilane + 4 NH4(+). Its pathway is porphyrin-containing compound metabolism; protoporphyrin-IX biosynthesis; coproporphyrinogen-III from 5-aminolevulinate: step 2/4. In terms of biological role, tetrapolymerization of the monopyrrole PBG into the hydroxymethylbilane pre-uroporphyrinogen in several discrete steps. This is Porphobilinogen deaminase from Mycobacterium avium (strain 104).